We begin with the raw amino-acid sequence, 472 residues long: Acyltransferase PapA3 (472 aa).

It belongs to the PapA acyltransferase family.

The catalysed reaction is a long-chain fatty acyl-CoA + alpha,alpha-trehalose = a 2-O-(long-chain fatty acyl)-alpha,alpha-trehalose + CoA. It carries out the reaction a mycolipenoyl-CoA + a 2-O-(long-chain fatty acyl)-alpha,alpha-trehalose = a 2-O-(long-chain fatty acyl)-3-O-mycolipenoyl-trehalose + CoA. The enzyme catalyses alpha,alpha-trehalose + hexadecanoyl-CoA = 2-O-hexadecanoyl-alpha,alpha-trehalose + CoA. It catalyses the reaction 2-O-hexadecanoyl-alpha,alpha-trehalose + hexadecanoyl-CoA = 2-O,3-O-dihexadecanoyl-alpha,alpha-trehalose + CoA. Functionally, involved in the biosynthesis of polyacyltrehalose (PAT), a pentaacylated, trehalose-based glycolipid that could have a role in anchoring the bacterial capsule. Catalyzes the sequential transfer of two palmitoyl groups onto a single glucose residue of trehalose generating the diacylated product 2,3-diacyltrehalose (trehalose dipalmitate). The polypeptide is Acyltransferase PapA3 (papA3) (Mycobacterium tuberculosis (strain CDC 1551 / Oshkosh)).